The sequence spans 517 residues: RNA-binding region-containing protein 3 (517 aa).

The tract at residues methionine 1–aspartate 26 is disordered. The tract at residues methionine 1 to methionine 257 is necessary for interaction with PDCD7. Residue serine 21 is modified to Phosphoserine. Residues arginine 27–glutamate 102 form the RRM 1 domain. Disordered stretches follow at residues valine 106–glutamate 130 and methionine 213–arginine 254. Serine 108 is subject to Phosphoserine. Over residues serine 115 to glutamate 130 the composition is skewed to basic and acidic residues. The necessary for binding to m(7)G-capped U12 snRNA stretch occupies residues aspartate 211 to aspartate 380. The segment covering alanine 217–proline 230 has biased composition (pro residues). Acidic residues predominate over residues proline 231 to glutamate 252. The RRM 2 domain occupies cysteine 420–serine 503.

As to quaternary structure, component of the U11/U12 snRNPs that are part of the U12-type spliceosome. Found in a complex with m(7)G-capped U12 snRNA. Interacts with PDCD7. Highly expressed in pancreas and kidney. Detected at lower levels in heart, brain, placenta, lung, liver, spleen, thymus, prostate, testis, ovary, small intestine, colon and leukocytes.

It localises to the nucleus. Its function is as follows. Participates in pre-mRNA U12-dependent splicing, performed by the minor spliceosome which removes U12-type introns. U12-type introns comprises less than 1% of all non-coding sequences. Binds to the 3'-stem-loop of m(7)G-capped U12 snRNA. This Homo sapiens (Human) protein is RNA-binding region-containing protein 3 (RNPC3).